Here is a 317-residue protein sequence, read N- to C-terminus: MTTQLDSLRNMTVVVADTGDIDAIKKYQPQDATTNPSLILSASALPQYAPLIDEAIAYAKAQSANKAQQLIDAEDKLAVNIGLEILKIVPGRISTEVDARLSYDTQATVEKARKLIALYNAAGISNDRILIKIASTWQGIRAAEILEKEGINCNLTLLFSEAQARACAEAGVYLISPFVGRILDWYKANSDKKEYAPAEDPGVISVTKIYNYYKEYGYNTVVMGASFRNVGEITELAGCDRLTIAPALLKELQENSTALVRKLEYKGEVKAKPQPLTEAEFYWQHNSDAMAVEKLAEGIRKFAVDQEKLETMLSAKL.

The active-site Schiff-base intermediate with substrate is the Lys132.

The protein belongs to the transaldolase family. Type 1 subfamily. Homodimer.

The protein localises to the cytoplasm. The enzyme catalyses D-sedoheptulose 7-phosphate + D-glyceraldehyde 3-phosphate = D-erythrose 4-phosphate + beta-D-fructose 6-phosphate. The protein operates within carbohydrate degradation; pentose phosphate pathway; D-glyceraldehyde 3-phosphate and beta-D-fructose 6-phosphate from D-ribose 5-phosphate and D-xylulose 5-phosphate (non-oxidative stage): step 2/3. Functionally, transaldolase is important for the balance of metabolites in the pentose-phosphate pathway. This chain is Transaldolase, found in Haemophilus influenzae (strain PittGG).